Reading from the N-terminus, the 516-residue chain is Maturase K (516 aa).

This sequence belongs to the intron maturase 2 family. MatK subfamily.

The protein resides in the plastid. Its subcellular location is the chloroplast. Its function is as follows. Usually encoded in the trnK tRNA gene intron. Probably assists in splicing its own and other chloroplast group II introns. The chain is Maturase K from Disporum sessile (Japanese fairy bells).